Consider the following 371-residue polypeptide: Maltose/maltodextrin import ATP-binding protein MalK (371 aa).

In terms of domain architecture, ABC transporter spans 4–234 (VTLKNVCKAY…PENRFVAGFI (231 aa)). 36–43 (GPSGCGKS) lines the ATP pocket.

It belongs to the ABC transporter superfamily. Maltooligosaccharide importer (TC 3.A.1.1.1) family. In terms of assembly, the complex is composed of two ATP-binding proteins (MalK), two transmembrane proteins (MalG and MalK) and a solute-binding protein (MalE).

The protein localises to the cell inner membrane. The catalysed reaction is D-maltose(out) + ATP + H2O = D-maltose(in) + ADP + phosphate + H(+). Functionally, part of the ABC transporter complex MalEFGK involved in maltose/maltodextrin import. Responsible for energy coupling to the transport system. The sequence is that of Maltose/maltodextrin import ATP-binding protein MalK from Vibrio vulnificus (strain CMCP6).